Consider the following 220-residue polypeptide: Fructose-6-phosphate aldolase (220 aa).

Catalysis depends on K85, which acts as the Schiff-base intermediate with substrate.

This sequence belongs to the transaldolase family. Type 3A subfamily. Homodecamer.

It is found in the cytoplasm. The catalysed reaction is beta-D-fructose 6-phosphate = dihydroxyacetone + D-glyceraldehyde 3-phosphate. Its function is as follows. Catalyzes the reversible formation of fructose 6-phosphate from dihydroxyacetone and D-glyceraldehyde 3-phosphate via an aldolization reaction. This Salmonella heidelberg (strain SL476) protein is Fructose-6-phosphate aldolase.